Here is a 155-residue protein sequence, read N- to C-terminus: MVMSEIQGQRIAFIQATWHRNIVDRARDGFTDAIVELGYPKDTVDFFEVPGAFEIPLHARRLAKTGRYQAIVAAGLVVDGGIYRHDFVATAVIDGLMRVQLDTDVPVFSVVLTPHHFHEHAEHVDYFSTHFVKKGAEAARAVDATVKSLKALPTS.

5-amino-6-(D-ribitylamino)uracil is bound by residues tryptophan 18, 52–54, and 76–78; these read AFE and LVV. Arginine 84 acts as the Proton donor in catalysis. Position 109 (serine 109) interacts with 5-amino-6-(D-ribitylamino)uracil. Histidine 123 lines the (2S)-2-hydroxy-3-oxobutyl phosphate pocket.

This sequence belongs to the DMRL synthase family.

It carries out the reaction (2S)-2-hydroxy-3-oxobutyl phosphate + 5-amino-6-(D-ribitylamino)uracil = 6,7-dimethyl-8-(1-D-ribityl)lumazine + phosphate + 2 H2O + H(+). It participates in cofactor biosynthesis; riboflavin biosynthesis; riboflavin from 2-hydroxy-3-oxobutyl phosphate and 5-amino-6-(D-ribitylamino)uracil: step 1/2. In terms of biological role, catalyzes the formation of 6,7-dimethyl-8-ribityllumazine by condensation of 5-amino-6-(D-ribitylamino)uracil with 3,4-dihydroxy-2-butanone 4-phosphate. This is the penultimate step in the biosynthesis of riboflavin. In Rhodococcus erythropolis (Arthrobacter picolinophilus), this protein is 6,7-dimethyl-8-ribityllumazine synthase.